A 50-amino-acid chain; its full sequence is PhoP/PhoQ regulator MgrB (50 aa).

The Cytoplasmic segment spans residues 1 to 4 (MLDL). Residues 5–27 (NITKLVTTVVIIAACCLFYLLAL) form a helical membrane-spanning segment. At 28–50 (DSYCDQGGTFSTGICAITTIVPW) the chain is on the periplasmic side.

It belongs to the MgrB family. In terms of assembly, probably interacts with the periplasmic domain of PhoQ.

The protein localises to the cell inner membrane. In terms of biological role, phoP-regulated transcription is redox-sensitive, being activated when the periplasm becomes more reducing. MgrB acts between DsbA/DsbB and PhoP/PhoQ in this pathway. Represses PhoP/PhoQ signaling, possibly by binding to the periplasmic domain of PhoQ, altering its activity and that of downstream effector PhoP. The chain is PhoP/PhoQ regulator MgrB from Yersinia pestis.